The following is a 461-amino-acid chain: Signal recognition particle receptor FtsY (461 aa).

A TPR repeat occupies phenylalanine 105 to glutamate 138. GTP contacts are provided by residues glycine 267–threonine 274, aspartate 349–arginine 353, and threonine 413–aspartate 416.

The protein belongs to the GTP-binding SRP family. FtsY subfamily. Part of the signal recognition particle protein translocation system, which is composed of SRP and FtsY.

It is found in the cell inner membrane. The protein localises to the cytoplasm. The catalysed reaction is GTP + H2O = GDP + phosphate + H(+). Its function is as follows. Involved in targeting and insertion of nascent membrane proteins into the cytoplasmic membrane. Acts as a receptor for the complex formed by the signal recognition particle (SRP) and the ribosome-nascent chain (RNC). In Aquifex aeolicus (strain VF5), this protein is Signal recognition particle receptor FtsY.